The sequence spans 295 residues: Ribosomal protein L11 methyltransferase (295 aa).

Residues Thr-150, Gly-171, Asp-193, and Asn-232 each contribute to the S-adenosyl-L-methionine site.

The protein belongs to the methyltransferase superfamily. PrmA family.

It localises to the cytoplasm. It carries out the reaction L-lysyl-[protein] + 3 S-adenosyl-L-methionine = N(6),N(6),N(6)-trimethyl-L-lysyl-[protein] + 3 S-adenosyl-L-homocysteine + 3 H(+). In terms of biological role, methylates ribosomal protein L11. This Neisseria meningitidis serogroup C / serotype 2a (strain ATCC 700532 / DSM 15464 / FAM18) protein is Ribosomal protein L11 methyltransferase.